We begin with the raw amino-acid sequence, 545 residues long: Glucose-6-phosphate isomerase (545 aa).

E351 functions as the Proton donor in the catalytic mechanism. Active-site residues include H382 and K510.

It belongs to the GPI family.

Its subcellular location is the cytoplasm. It carries out the reaction alpha-D-glucose 6-phosphate = beta-D-fructose 6-phosphate. The protein operates within carbohydrate biosynthesis; gluconeogenesis. Its pathway is carbohydrate degradation; glycolysis; D-glyceraldehyde 3-phosphate and glycerone phosphate from D-glucose: step 2/4. Functionally, catalyzes the reversible isomerization of glucose-6-phosphate to fructose-6-phosphate. This chain is Glucose-6-phosphate isomerase, found in Shewanella baltica (strain OS195).